The primary structure comprises 422 residues: L-cysteine:1D-myo-inositol 2-amino-2-deoxy-alpha-D-glucopyranoside ligase (422 aa).

Position 43 (Cys-43) interacts with Zn(2+). L-cysteinyl-5'-AMP contacts are provided by residues 43 to 46, Thr-58, and 81 to 83; these read CGIT and NVT. The 'HIGH' region motif lies at 45–55; sequence ITPYDATHLGH. Residues 185–200 show a composition bias toward basic and acidic residues; the sequence is AERGGDPDRPGKRNRL. A disordered region spans residues 185–221; it reads AERGGDPDRPGKRNRLDPMLWRGRRPGEPSWPGPRGV. Residues 186-191 carry the 'ERGGDP' region motif; the sequence is ERGGDP. Residue Trp-227 coordinates L-cysteinyl-5'-AMP. Residue Cys-231 participates in Zn(2+) binding. Residue 249–251 coordinates L-cysteinyl-5'-AMP; sequence GSD. His-256 contributes to the Zn(2+) binding site. Residue Ile-288 coordinates L-cysteinyl-5'-AMP. The 'KMSKS' region signature appears at 294-298; the sequence is KMSKS.

This sequence belongs to the class-I aminoacyl-tRNA synthetase family. MshC subfamily. As to quaternary structure, monomer. Requires Zn(2+) as cofactor.

The enzyme catalyses 1D-myo-inositol 2-amino-2-deoxy-alpha-D-glucopyranoside + L-cysteine + ATP = 1D-myo-inositol 2-(L-cysteinylamino)-2-deoxy-alpha-D-glucopyranoside + AMP + diphosphate + H(+). Catalyzes the ATP-dependent condensation of GlcN-Ins and L-cysteine to form L-Cys-GlcN-Ins. The protein is L-cysteine:1D-myo-inositol 2-amino-2-deoxy-alpha-D-glucopyranoside ligase of Geodermatophilus obscurus (strain ATCC 25078 / DSM 43160 / JCM 3152 / CCUG 61914 / KCC A-0152 / KCTC 9177 / NBRC 13315 / NRRL B-3577 / G-20).